The sequence spans 486 residues: Aspartyl/glutamyl-tRNA(Asn/Gln) amidotransferase subunit B (486 aa).

Belongs to the GatB/GatE family. GatB subfamily. In terms of assembly, heterotrimer of A, B and C subunits.

It carries out the reaction L-glutamyl-tRNA(Gln) + L-glutamine + ATP + H2O = L-glutaminyl-tRNA(Gln) + L-glutamate + ADP + phosphate + H(+). The enzyme catalyses L-aspartyl-tRNA(Asn) + L-glutamine + ATP + H2O = L-asparaginyl-tRNA(Asn) + L-glutamate + ADP + phosphate + 2 H(+). In terms of biological role, allows the formation of correctly charged Asn-tRNA(Asn) or Gln-tRNA(Gln) through the transamidation of misacylated Asp-tRNA(Asn) or Glu-tRNA(Gln) in organisms which lack either or both of asparaginyl-tRNA or glutaminyl-tRNA synthetases. The reaction takes place in the presence of glutamine and ATP through an activated phospho-Asp-tRNA(Asn) or phospho-Glu-tRNA(Gln). The sequence is that of Aspartyl/glutamyl-tRNA(Asn/Gln) amidotransferase subunit B from Leptospira borgpetersenii serovar Hardjo-bovis (strain L550).